Consider the following 315-residue polypeptide: MVTSMLPAGLVASAVVSASSANLGPGFDSIGLALSLIDEITVETTDSGLVVQVEGEGADQVPLGPEHLVVRAVECGLRAVGVRAAGLVVRCRNAIPHSRGLGSSAAAVVGGLAAANGLVAQANCQPLSDAALIQLSSEFEGHPDNAAAAVFGGAIVSWIDRGGQHPRYAAAPLRLHPDIHLYCAIPQERSLTAETRVLLPAQVSHEDARFNVSRAALLVVALTERPDLLMAATEDVLHQPQRAPAMPASAEYLRLLRRHNVAATLSGAGPSLIALTTASALPPEVMEYGAANGFTLAEMTAGEGVRWSPGVTVVG.

An ATP-binding site is contributed by 96-106; the sequence is PHSRGLGSSAA.

Belongs to the GHMP kinase family. Homoserine kinase subfamily.

It localises to the cytoplasm. It carries out the reaction L-homoserine + ATP = O-phospho-L-homoserine + ADP + H(+). Its pathway is amino-acid biosynthesis; L-threonine biosynthesis; L-threonine from L-aspartate: step 4/5. In terms of biological role, catalyzes the ATP-dependent phosphorylation of L-homoserine to L-homoserine phosphate. The polypeptide is Homoserine kinase (Mycolicibacterium paratuberculosis (strain ATCC BAA-968 / K-10) (Mycobacterium paratuberculosis)).